The sequence spans 580 residues: Proline--tRNA ligase (580 aa).

Belongs to the class-II aminoacyl-tRNA synthetase family. ProS type 1 subfamily. In terms of assembly, homodimer.

The protein localises to the cytoplasm. It catalyses the reaction tRNA(Pro) + L-proline + ATP = L-prolyl-tRNA(Pro) + AMP + diphosphate. In terms of biological role, catalyzes the attachment of proline to tRNA(Pro) in a two-step reaction: proline is first activated by ATP to form Pro-AMP and then transferred to the acceptor end of tRNA(Pro). As ProRS can inadvertently accommodate and process non-cognate amino acids such as alanine and cysteine, to avoid such errors it has two additional distinct editing activities against alanine. One activity is designated as 'pretransfer' editing and involves the tRNA(Pro)-independent hydrolysis of activated Ala-AMP. The other activity is designated 'posttransfer' editing and involves deacylation of mischarged Ala-tRNA(Pro). The misacylated Cys-tRNA(Pro) is not edited by ProRS. This is Proline--tRNA ligase from Maridesulfovibrio salexigens (strain ATCC 14822 / DSM 2638 / NCIMB 8403 / VKM B-1763) (Desulfovibrio salexigens).